A 234-amino-acid chain; its full sequence is Urease accessory protein UreG 1 (234 aa).

The tract at residues 1 to 29 is disordered; sequence MTRTPTGVPMHLGHTHDAPAAVSADATRP. Residue 42–49 participates in GTP binding; sequence GPVGSGKT.

It belongs to the SIMIBI class G3E GTPase family. UreG subfamily. In terms of assembly, homodimer. UreD, UreF and UreG form a complex that acts as a GTP-hydrolysis-dependent molecular chaperone, activating the urease apoprotein by helping to assemble the nickel containing metallocenter of UreC. The UreE protein probably delivers the nickel.

The protein resides in the cytoplasm. Functionally, facilitates the functional incorporation of the urease nickel metallocenter. This process requires GTP hydrolysis, probably effectuated by UreG. This chain is Urease accessory protein UreG 1, found in Streptomyces griseus subsp. griseus (strain JCM 4626 / CBS 651.72 / NBRC 13350 / KCC S-0626 / ISP 5235).